A 996-amino-acid chain; its full sequence is TBC1 domain family member 31 (996 aa).

WD repeat units follow at residues 33–74 (HSTS…LHGN), 75–116 (RFNL…TVTK), 117–157 (ELVS…LDTF), 158–200 (QRKR…CDTL), 201–248 (FCKY…ATGL), 249–296 (FRII…IQTC), and 297–334 (KLLFEIGTVEEGISSSVISPHGRYIASIMENGSLNVYS). The stretch at 388–414 (TRVLKQDLTGDLENKENELSEGLNKKR) forms a coiled coil. The region spanning 424 to 599 (EYPTKYRMFI…RLFDNIFSNH (176 aa)) is the Rab-GAP TBC domain. A coiled-coil region spans residues 699–844 (ELDFLRERQT…LTTSQEAVAK (146 aa)). Positions 983–986 (RARN) are mediates direct interaction with PJA2.

Interacts with PJA2; the interaction is direct and recruits PJA2 to centrosomes. Interacts with OFD1; regulates its activity in cilium assembly. Interacts with PRKACA.

The protein resides in the cytoplasm. The protein localises to the cytoskeleton. It is found in the microtubule organizing center. It localises to the centrosome. Its subcellular location is the centriolar satellite. The protein resides in the cilium basal body. Its function is as follows. Molecular adapter which is involved in cilium biogenesis. Part of a functional complex including OFD1 a centriolar protein involved in cilium assembly. Could regulate the cAMP-dependent phosphorylation of OFD1, and its subsequent ubiquitination by PJA2 which ultimately leads to its proteasomal degradation. The sequence is that of TBC1 domain family member 31 from Mus musculus (Mouse).